The sequence spans 271 residues: Mannosyl-3-phosphoglycerate phosphatase (271 aa).

The Nucleophile role is filled by Asp13. Mg(2+) contacts are provided by Asp13, Asp15, and Asp214.

It belongs to the HAD-like hydrolase superfamily. MPGP family. It depends on Mg(2+) as a cofactor.

The protein localises to the cytoplasm. It carries out the reaction 2-O-(alpha-D-mannosyl)-3-phosphoglycerate + H2O = (2R)-2-O-(alpha-D-mannosyl)-glycerate + phosphate. This chain is Mannosyl-3-phosphoglycerate phosphatase, found in Escherichia coli (strain SMS-3-5 / SECEC).